The following is a 171-amino-acid chain: Large ribosomal subunit protein uL10 (171 aa).

Belongs to the universal ribosomal protein uL10 family. In terms of assembly, part of the ribosomal stalk of the 50S ribosomal subunit. The N-terminus interacts with L11 and the large rRNA to form the base of the stalk. The C-terminus forms an elongated spine to which L12 dimers bind in a sequential fashion forming a multimeric L10(L12)X complex.

Its function is as follows. Forms part of the ribosomal stalk, playing a central role in the interaction of the ribosome with GTP-bound translation factors. In Lactococcus lactis subsp. cremoris (strain SK11), this protein is Large ribosomal subunit protein uL10.